We begin with the raw amino-acid sequence, 962 residues long: Vacuolar membrane protease (962 aa).

The Cytoplasmic segment spans residues 1-15 (MVSSRRGFNPIAFTP). Residues 16 to 36 (WPVTILSSLVYLALIIPIIVV) form a helical membrane-spanning segment. Over 37 to 390 (HHLVPPAPKE…FQLNTLFGHS (354 aa)) the chain is Vacuolar. Asn110 and Asn113 each carry an N-linked (GlcNAc...) asparagine glycan. Residues His169 and Asp181 each coordinate Zn(2+). Glu215 acts as the Proton acceptor in catalysis. The Zn(2+) site is built by Glu216, Glu241, and His314. Residues 391 to 411 (VALLVVAPLLLIITSVALFAV) traverse the membrane as a helical segment. The Cytoplasmic segment spans residues 412–440 (DKMYMFSMYTYISESGGQVSLYGLRGMFR). The helical transmembrane segment at 441–461 (FPLILGISTALTIALAFLIMK) threads the bilayer. The Vacuolar portion of the chain corresponds to 462 to 472 (VNPFIIYSSPY). The helical transmembrane segment at 473–493 (AVWSMMLSTCMFFAWFISCVA) threads the bilayer. Over 494-503 (DFARPSALHR) the chain is Cytoplasmic. The helical transmembrane segment at 504-524 (AYSFSWMFGIMWVFLVIATVY) threads the bilayer. At 525–534 (QKQHGIASSY) the chain is on the vacuolar side. Residues 535-555 (FIVFYFAGVAVATWISYLELF) form a helical membrane-spanning segment. The Cytoplasmic segment spans residues 556–667 (GLPKTQDYAR…WSIYLMSSAW (112 aa)). The disordered stretch occupies residues 568 to 617 (GRLSDRTPSSDSHFLAPSADELPSSSSAAGRDFNPEDVEDEEPTESTSLL). Acidic residues predominate over residues 602 to 611 (PEDVEDEEPT). Residues 668–688 (ILQFLLVAPIVIILLGQLGLF) form a helical membrane-spanning segment. Residues 689-704 (LTSATYQIGADGGSQL) lie on the Vacuolar side of the membrane. A helical transmembrane segment spans residues 705 to 725 (VIYIGIAVLSVLILLPLFPFI). The Cytoplasmic segment spans residues 726-731 (HRFTYH). A helical membrane pass occupies residues 732-752 (IPTFLLFILIGTLVYNLTAFP). The Vacuolar portion of the chain corresponds to 753–962 (FSHSNRLKLA…LVEGSYSFKL (210 aa)). Asn834 carries N-linked (GlcNAc...) asparagine glycosylation.

The protein belongs to the peptidase M28 family. It depends on Zn(2+) as a cofactor.

Its subcellular location is the vacuole membrane. In terms of biological role, may be involved in vacuolar sorting and osmoregulation. The chain is Vacuolar membrane protease from Arthroderma benhamiae (strain ATCC MYA-4681 / CBS 112371) (Trichophyton mentagrophytes).